We begin with the raw amino-acid sequence, 352 residues long: 3-isopropylmalate dehydrogenase (352 aa).

NAD(+) is bound at residue 71-87 (GAHDSAWNQLPRHLRPE). Substrate is bound by residues Arg94, Arg104, Arg132, and Asp218. Mg(2+) contacts are provided by Asp218, Asp242, and Asp246. An NAD(+)-binding site is contributed by 275–287 (GSAPDIAGQGVAN).

This sequence belongs to the isocitrate and isopropylmalate dehydrogenases family. LeuB type 1 subfamily. As to quaternary structure, homodimer. The cofactor is Mg(2+). Mn(2+) is required as a cofactor.

The protein localises to the cytoplasm. The enzyme catalyses (2R,3S)-3-isopropylmalate + NAD(+) = 4-methyl-2-oxopentanoate + CO2 + NADH. The protein operates within amino-acid biosynthesis; L-leucine biosynthesis; L-leucine from 3-methyl-2-oxobutanoate: step 3/4. Functionally, catalyzes the oxidation of 3-carboxy-2-hydroxy-4-methylpentanoate (3-isopropylmalate) to 3-carboxy-4-methyl-2-oxopentanoate. The product decarboxylates to 4-methyl-2 oxopentanoate. The protein is 3-isopropylmalate dehydrogenase of Deinococcus radiodurans (strain ATCC 13939 / DSM 20539 / JCM 16871 / CCUG 27074 / LMG 4051 / NBRC 15346 / NCIMB 9279 / VKM B-1422 / R1).